The sequence spans 143 residues: Deoxyuridine 5'-triphosphate nucleotidohydrolase (143 aa).

Substrate contacts are provided by residues Arg62 to Gly64, Asn75, Thr79 to Asp81, and Lys89.

Belongs to the dUTPase family. Mg(2+) is required as a cofactor.

The catalysed reaction is dUTP + H2O = dUMP + diphosphate + H(+). Its pathway is pyrimidine metabolism; dUMP biosynthesis; dUMP from dCTP (dUTP route): step 2/2. Functionally, this enzyme is involved in nucleotide metabolism: it produces dUMP, the immediate precursor of thymidine nucleotides and it decreases the intracellular concentration of dUTP so that uracil cannot be incorporated into DNA. This Clostridium kluyveri (strain ATCC 8527 / DSM 555 / NBRC 12016 / NCIMB 10680 / K1) protein is Deoxyuridine 5'-triphosphate nucleotidohydrolase.